The primary structure comprises 290 residues: MRAPLLLESRDYLLSEQMPVAVTNRYPQETFVEHTHQFCEIVIVWRGNGLHVLNDHPYRITCGDVFYIQAADHHSYESVHDLVLDNIIYCPERLHLNAQWHKLLPPLGPEQNQGYWRLTTQGMAQARPIIQQLAQESRKTDSWSIQLTEVLLLQLAIVLKRHRYRAEHAHLLPDGEQLDLIMSALQQSLGAYFDMADFCHKNQLVERSLKQLFRQQTGMSISHYLRQIRLCHAKCLLRGSEHRISDIAARCGFEDSNYFSAVFTREAGMTPRDYRQRFIRSPVLPAKNEP.

The region spanning 179–277 (DLIMSALQQS…GMTPRDYRQR (99 aa)) is the HTH araC/xylS-type domain. 2 DNA-binding regions (H-T-H motif) span residues 196–217 (ADFC…RQQT) and 244–267 (ISDI…TREA).

In terms of assembly, binds DNA as a dimer.

It localises to the cytoplasm. In terms of biological role, activates expression of the rhaSR operon in response to L-rhamnose. The polypeptide is HTH-type transcriptional activator RhaR (Yersinia pseudotuberculosis serotype O:1b (strain IP 31758)).